A 441-amino-acid polypeptide reads, in one-letter code: Amino-acid acetyltransferase (441 aa).

Residues 295–434 form the N-acetyltransferase domain; it reads EQVRRATIND…QALYNYQRRS (140 aa).

Belongs to the acetyltransferase family. ArgA subfamily. As to quaternary structure, homohexamer.

It is found in the cytoplasm. It catalyses the reaction L-glutamate + acetyl-CoA = N-acetyl-L-glutamate + CoA + H(+). It functions in the pathway amino-acid biosynthesis; L-arginine biosynthesis; N(2)-acetyl-L-ornithine from L-glutamate: step 1/4. This is Amino-acid acetyltransferase from Pectobacterium carotovorum subsp. carotovorum (strain PC1).